We begin with the raw amino-acid sequence, 226 residues long: Transcriptional regulatory protein PcoR (226 aa).

Residues 3–117 (RILIVEDEQK…ELVARVRTLL (115 aa)) form the Response regulatory domain. D52 is modified (4-aspartylphosphate). Positions 125-223 (ATVCTIADMT…VRGAGYVLEI (99 aa)) form a DNA-binding region, ompR/PhoB-type.

Phosphorylated by PcoS.

It localises to the cytoplasm. In terms of biological role, probable member of a two-component regulatory system PcoS/PcoR. May be involved in the activation of copper resistance gene operon pcoABCD by binding to a specific site on the cop operon promoter (copper box). The protein is Transcriptional regulatory protein PcoR (pcoR) of Escherichia coli.